We begin with the raw amino-acid sequence, 843 residues long: Probable disease resistance protein At5g47250 (843 aa).

The stretch at 28–58 (MLKENLVLLKSAFDELKAEKEDVVNRVNAGE) forms a coiled coil. Residues 141–440 (TEQPPPPVVE…GEGFIDEKDG (300 aa)) form the NB-ARC domain. ATP is bound at residue 183-190 (GMGGVGKT). 5 LRR repeats span residues 510 to 531 (TVTK…PEFP), 535 to 556 (NLVT…FFLV), 559 to 581 (TLVV…ISAL), 583 to 604 (SLRL…LGVL), and 606 to 628 (KLIH…SELQ).

This sequence belongs to the disease resistance NB-LRR family.

Probable disease resistance protein. The sequence is that of Probable disease resistance protein At5g47250 from Arabidopsis thaliana (Mouse-ear cress).